A 101-amino-acid chain; its full sequence is uncharacterized protein (101 aa).

The next 3 helical transmembrane spans lie at 20-40, 59-79, and 81-101; these read KHFI…LLGL, GVIA…MYIA, and SEMW…ALFF.

The protein localises to the endoplasmic reticulum. The protein resides in the membrane. This is an uncharacterized protein from Saccharomyces cerevisiae (strain ATCC 204508 / S288c) (Baker's yeast).